A 456-amino-acid polypeptide reads, in one-letter code: MLNSAMSVVILAAGKGTRMYSDIPKVLHTLAGKPMVQHVIDAATKLGAAQVHLVYGHGGELLKQTLKDDKLNWVLQAEQLGTGHAMQKAAPFFSDDEDILMLYGDVPLISVETLQRLRDAKPQGGIGLLTVKLDDPSGYGRITRENGKVTGIVEHKDATDEQRQIQEINTGILIANGADLKRWLSKLTNNNAQGEYYITDIIALAYQEGREIAAVYPARISETDGVNNRLQLSRLERIYQAEQAEKLLLSGVMLRDPARFDLRGTLHCGMDVEIDANVIIEGYVTLGHRVKIGAGCIIKNSVIGDDCEISPYSVVEDAHLEAACTIGPFARLRPGAELLAGAHVGNFVEMKKARLGKGSKAGHLTYLGDAEIGDNVNIGAGTITCNYDGANKFKTVIGDDVFVGSDTQLVAPVTVGKGATIAAGTTVTRNVADNELVLSRVPQVHKQGWQRPVKKK.

The tract at residues 1 to 229 (MLNSAMSVVI…ISETDGVNNR (229 aa)) is pyrophosphorylase. UDP-N-acetyl-alpha-D-glucosamine-binding positions include 11–14 (LAAG), Lys-25, Gln-76, 81–82 (GT), 103–105 (YGD), Gly-140, Glu-154, Asn-169, and Asn-227. Asp-105 serves as a coordination point for Mg(2+). Asn-227 contributes to the Mg(2+) binding site. The tract at residues 230-250 (LQLSRLERIYQAEQAEKLLLS) is linker. Positions 251–456 (GVMLRDPARF…QGWQRPVKKK (206 aa)) are N-acetyltransferase. 2 residues coordinate UDP-N-acetyl-alpha-D-glucosamine: Arg-333 and Lys-351. His-363 acts as the Proton acceptor in catalysis. UDP-N-acetyl-alpha-D-glucosamine-binding residues include Tyr-366 and Asn-377. Residues Ala-380, 386–387 (NY), Ser-405, Ala-423, and Arg-440 each bind acetyl-CoA.

In the N-terminal section; belongs to the N-acetylglucosamine-1-phosphate uridyltransferase family. This sequence in the C-terminal section; belongs to the transferase hexapeptide repeat family. In terms of assembly, homotrimer. Mg(2+) is required as a cofactor.

The protein resides in the cytoplasm. It catalyses the reaction alpha-D-glucosamine 1-phosphate + acetyl-CoA = N-acetyl-alpha-D-glucosamine 1-phosphate + CoA + H(+). The enzyme catalyses N-acetyl-alpha-D-glucosamine 1-phosphate + UTP + H(+) = UDP-N-acetyl-alpha-D-glucosamine + diphosphate. The protein operates within nucleotide-sugar biosynthesis; UDP-N-acetyl-alpha-D-glucosamine biosynthesis; N-acetyl-alpha-D-glucosamine 1-phosphate from alpha-D-glucosamine 6-phosphate (route II): step 2/2. It participates in nucleotide-sugar biosynthesis; UDP-N-acetyl-alpha-D-glucosamine biosynthesis; UDP-N-acetyl-alpha-D-glucosamine from N-acetyl-alpha-D-glucosamine 1-phosphate: step 1/1. It functions in the pathway bacterial outer membrane biogenesis; LPS lipid A biosynthesis. Its function is as follows. Catalyzes the last two sequential reactions in the de novo biosynthetic pathway for UDP-N-acetylglucosamine (UDP-GlcNAc). The C-terminal domain catalyzes the transfer of acetyl group from acetyl coenzyme A to glucosamine-1-phosphate (GlcN-1-P) to produce N-acetylglucosamine-1-phosphate (GlcNAc-1-P), which is converted into UDP-GlcNAc by the transfer of uridine 5-monophosphate (from uridine 5-triphosphate), a reaction catalyzed by the N-terminal domain. The sequence is that of Bifunctional protein GlmU from Salmonella gallinarum (strain 287/91 / NCTC 13346).